The sequence spans 197 residues: Nucleoid occlusion factor SlmA (197 aa).

Positions 7–67 (INRREHILQC…GLIEFIEDAI (61 aa)) constitute an HTH tetR-type domain. The H-T-H motif DNA-binding region spans 30-49 (TTAKLAAEVGVSEAALYRHF). A coiled-coil region spans residues 110–130 (ALLGENERLRSRIDVLFAKIE).

Belongs to the nucleoid occlusion factor SlmA family. As to quaternary structure, homodimer. Interacts with FtsZ.

The protein localises to the cytoplasm. The protein resides in the nucleoid. In terms of biological role, required for nucleoid occlusion (NO) phenomenon, which prevents Z-ring formation and cell division over the nucleoid. Acts as a DNA-associated cell division inhibitor that binds simultaneously chromosomal DNA and FtsZ, and disrupts the assembly of FtsZ polymers. SlmA-DNA-binding sequences (SBS) are dispersed on non-Ter regions of the chromosome, preventing FtsZ polymerization at these regions. In Shewanella frigidimarina (strain NCIMB 400), this protein is Nucleoid occlusion factor SlmA.